The chain runs to 540 residues: MALQSTILHMARKNLLQESCRQLLIQTHGLHKSVASGSLEIAAHSQADLKEESAVSPAEEVQKAARVKSLKEMPGPSTVANLLEFFYRDGFSRIHEIQMEHAKKYGKIFKSRFGPQFVVSIADRDMVAQVLRSESATPQRGNMESWKEYRDLRGRSTGLISAEGDEWLKMRSVLRQLIMRPRDVAVFSSDVNDVVADLVKRVKTLRSQQDDSQTVLNINDLFFKYAMEGVATILYETRLGCLENEIPKMSQEYITALHLMFSSFKTTMYAGAIPKWLRPIIPKPWEEFCSSWDGLFKFSQIHVDKRLSEIKKQMEKSEEIKGGLLTHMLVTREMNLEEIYANMTEMLLAGVDTTSFTLSWSTYLLARHPTIQQQIFEEVDRVLGGRVPTGEDVPYLPLIRGLVKETLRLFPVLPGNGRVTHDDLIVGGYLIPKGTQLALCHYSTSMDEENFPRPEEFRPDRWIRKDASDRVDNFGSIPFGYGIRSCIGRRIAELEMHLALTQLLQNFHIEVSPQTTEVHAKTHGLLCPGASINLRFTDRK.

Cysteine 486 contacts heme.

It belongs to the cytochrome P450 family. Heme is required as a cofactor. As to expression, following L-thyroxine, expressed in the retinal pigment epithelium (at protein level).

It localises to the membrane. It catalyses the reaction all-trans-retinol + 2 reduced [adrenodoxin] + O2 + 2 H(+) = all-trans-3,4-didehydroretinol + 2 oxidized [adrenodoxin] + 2 H2O. Functionally, efficiently catalyzes the conversion of all-trans retinol (also called vitamin A1, the precursor of 11-cis retinal) to 3,4-didehydroretinol (also called vitamin A2, the precursor of 11-cis 3,4-didehydroretinal). Also acts on all-trans retinal and all-trans retinoic acid. The replacement of 11-cis retinal chromophore in photopigments with 11-cis 3,4-didehydroretinal enhances sensitivity to long-wavelength light. This may improve vision in fresh water which is often turbid. The protein is Cytochrome P450 27C1 (cyp27c1) of Danio rerio (Zebrafish).